Here is a 396-residue protein sequence, read N- to C-terminus: ATP-dependent RNA helicase eIF4A (396 aa).

The interval 1–20 is disordered; that stretch reads MADKGLEDVPEGQIESNYDE. Positions 23 to 51 match the Q motif motif; it reads DSFDAMNLKAELLRGVYAYGFERPSAIQQ. The Helicase ATP-binding domain maps to 54 to 224; that stretch reads IMPVIKGHDV…TKFMRDPVRI (171 aa). 67–74 serves as a coordination point for ATP; that stretch reads AQSGTGKT. Positions 172–175 match the DEAD box motif; the sequence is DEAD. Residues 235-396 enclose the Helicase C-terminal domain; the sequence is GIKQFYIAVE…EMPMNVADLI (162 aa).

It belongs to the DEAD box helicase family. eIF4A subfamily. As to quaternary structure, component of the eIF4F complex, which composition varies with external and internal environmental conditions. It is composed of at least eIF4A, eIF4E and eIF4G.

The protein localises to the cytoplasm. It carries out the reaction ATP + H2O = ADP + phosphate + H(+). Functionally, ATP-dependent RNA helicase which is a subunit of the eIF4F complex involved in cap recognition and is required for mRNA binding to ribosome. In the current model of translation initiation, eIF4A unwinds RNA secondary structures in the 5'-UTR of mRNAs which is necessary to allow efficient binding of the small ribosomal subunit, and subsequent scanning for the initiator codon. The chain is ATP-dependent RNA helicase eIF4A (TIF1) from Phaeosphaeria nodorum (strain SN15 / ATCC MYA-4574 / FGSC 10173) (Glume blotch fungus).